The following is a 415-amino-acid chain: WD repeat and FYVE domain-containing protein 2 (415 aa).

WD repeat units follow at residues 71–103, 119–148, 202–232, and 245–284; these read HHFM…YEFS, CHAG…IVWH, AHTN…IMWD, and GHNG…VETP. The segment at 286–357 adopts an FYVE-type zinc-finger fold; the sequence is WKTSDCCQKC…ICNDCNARMK (72 aa). Zn(2+)-binding residues include Cys292, Cys295, Cys319, Cys322, Cys327, Cys330, Cys349, and Cys352. Residues 373–403 form a WD 5 repeat; it reads EIHTGITAMHLQETLGLLVTSGQNRVIMIWD.

Functionally, plays a role in coelomocyte endocytosis. The protein is WD repeat and FYVE domain-containing protein 2 (wdfy-2) of Caenorhabditis elegans.